The following is a 197-amino-acid chain: Sodium/potassium-transporting ATPase subunit beta-1-interacting protein 3 (197 aa).

Transmembrane regions (helical) follow at residues 2-22 (GCCT…VSAL), 35-55 (APIL…FGTI), 62-82 (IMVY…IICF), and 152-172 (VQIL…SISM).

Belongs to the NKAIN family. As to quaternary structure, interacts with ATP1B1.

It localises to the cell membrane. This is Sodium/potassium-transporting ATPase subunit beta-1-interacting protein 3 (NKAIN3) from Homo sapiens (Human).